The following is a 315-amino-acid chain: MLQFSTFLVLLYISISYVLPLYATSQPEGSKRDNPRTIKSRMQKLTIMLISNLFLVPFLQSQLSSTTSHISFKDAFLGLGIIPGYYAALPNPWQFSQFVKDLTKCVAMLLTLYCGPVLDFVLYHLLNPKSSILEDFYHEFLNIWSFRNFIFAPITEEIFYTSMLLTTYLNLIPHSQLSYQQLFWQPSLFFGLAHAHHAYEQLQEGSMTTVSILLTTCFQILYTTLFGGLTKFVFVRTGGNLWCCIILHALCNIMGFPGPSRLNLHFTVVDKKAGRISKLVSIWNKCYFALLVLGLISLKDTLQTLVGTPGYRITL.

Over 1-3 the chain is Lumenal; it reads MLQ. Residues 4–23 form a helical membrane-spanning segment; sequence FSTFLVLLYISISYVLPLYA. At 24-44 the chain is on the cytoplasmic side; the sequence is TSQPEGSKRDNPRTIKSRMQK. A helical membrane pass occupies residues 45-65; the sequence is LTIMLISNLFLVPFLQSQLSS. The Lumenal portion of the chain corresponds to 66-74; sequence TTSHISFKD. A helical transmembrane segment spans residues 75–95; that stretch reads AFLGLGIIPGYYAALPNPWQF. Topologically, residues 96–105 are cytoplasmic; it reads SQFVKDLTKC. The helical transmembrane segment at 106–126 threads the bilayer; the sequence is VAMLLTLYCGPVLDFVLYHLL. The Lumenal segment spans residues 127–148; sequence NPKSSILEDFYHEFLNIWSFRN. Residues 149–169 traverse the membrane as a helical segment; sequence FIFAPITEEIFYTSMLLTTYL. Residues E156 and H194 each act as proton donor/acceptor in the active site. Over 170 to 208 the chain is Cytoplasmic; the sequence is NLIPHSQLSYQQLFWQPSLFFGLAHAHHAYEQLQEGSMT. Residues 209–229 traverse the membrane as a helical segment; sequence TVSILLTTCFQILYTTLFGGL. The Lumenal segment spans residues 230 to 237; the sequence is TKFVFVRT. The chain crosses the membrane as a helical span at residues 238–258; sequence GGNLWCCIILHALCNIMGFPG. The Cytoplasmic portion of the chain corresponds to 259–275; sequence PSRLNLHFTVVDKKAGR. Residues 276-296 traverse the membrane as a helical segment; sequence ISKLVSIWNKCYFALLVLGLI. At 297 to 315 the chain is on the lumenal side; the sequence is SLKDTLQTLVGTPGYRITL.

The protein belongs to the peptidase U48 family.

The protein localises to the endoplasmic reticulum membrane. The enzyme catalyses Hydrolyzes the peptide bond -P2-(S-farnesyl or geranylgeranyl)C-P1'-P2'-P3'-COOH where P1' and P2' are amino acids with aliphatic sidechains and P3' is any C-terminal residue.. Its function is as follows. Protease involved in the processing of a variety of prenylated proteins containing the C-terminal CAAX motif, where C is a cysteine modified with an isoprenoid lipid, A is an aliphatic amino acid and X is any C-terminal amino acid. Proteolytically removes the C-terminal three residues of farnesylated proteins, leaving the prenylated cysteine as the new C-terminus. Target proteins include the a-factor mating pheromone and RAS. Its substrate specificity is overlapping but distinct with that of STE24. This chain is CAAX prenyl protease 2 (RCE1), found in Saccharomyces cerevisiae (strain ATCC 204508 / S288c) (Baker's yeast).